The sequence spans 259 residues: Phosphatidylglycerol--prolipoprotein diacylglyceryl transferase (259 aa).

A run of 4 helical transmembrane segments spans residues 9–29, 55–75, 92–112, and 117–137; these read IIFS…VVGI, FITY…VLLY, EGGM…YLFC, and INFL…LFLG. Arg138 lines the a 1,2-diacyl-sn-glycero-3-phospho-(1'-sn-glycerol) pocket. Helical transmembrane passes span 172–192, 201–221, and 228–248; these read QLYE…YATF, GLNS…IEIF, and IGFI…MLLL.

The protein belongs to the Lgt family.

The protein resides in the cell inner membrane. The catalysed reaction is L-cysteinyl-[prolipoprotein] + a 1,2-diacyl-sn-glycero-3-phospho-(1'-sn-glycerol) = an S-1,2-diacyl-sn-glyceryl-L-cysteinyl-[prolipoprotein] + sn-glycerol 1-phosphate + H(+). It participates in protein modification; lipoprotein biosynthesis (diacylglyceryl transfer). In terms of biological role, catalyzes the transfer of the diacylglyceryl group from phosphatidylglycerol to the sulfhydryl group of the N-terminal cysteine of a prolipoprotein, the first step in the formation of mature lipoproteins. The protein is Phosphatidylglycerol--prolipoprotein diacylglyceryl transferase of Rickettsia felis (strain ATCC VR-1525 / URRWXCal2) (Rickettsia azadi).